A 283-amino-acid chain; its full sequence is Pantothenate synthetase (283 aa).

30-37 provides a ligand contact to ATP; sequence MGNLHDGH. His-37 (proton donor) is an active-site residue. (R)-pantoate is bound at residue Gln-61. Gln-61 contributes to the beta-alanine binding site. 149–152 is an ATP binding site; the sequence is GEKD. Position 155 (Gln-155) interacts with (R)-pantoate. ATP is bound at residue 186–189; it reads LSSR.

It belongs to the pantothenate synthetase family. Homodimer.

It localises to the cytoplasm. It catalyses the reaction (R)-pantoate + beta-alanine + ATP = (R)-pantothenate + AMP + diphosphate + H(+). The protein operates within cofactor biosynthesis; (R)-pantothenate biosynthesis; (R)-pantothenate from (R)-pantoate and beta-alanine: step 1/1. Catalyzes the condensation of pantoate with beta-alanine in an ATP-dependent reaction via a pantoyl-adenylate intermediate. In Shigella sonnei (strain Ss046), this protein is Pantothenate synthetase.